Consider the following 432-residue polypeptide: Putative D-alanyl-D-alanine carboxypeptidase (432 aa).

A helical; Signal-anchor transmembrane segment spans residues 7 to 25 (ATVLLTFSLSAFAVEYPVL).

Belongs to the peptidase S12 family. YfeW subfamily.

The protein localises to the cell inner membrane. It catalyses the reaction Preferential cleavage: (Ac)2-L-Lys-D-Ala-|-D-Ala. Also transpeptidation of peptidyl-alanyl moieties that are N-acyl substituents of D-alanine.. In Salmonella choleraesuis (strain SC-B67), this protein is Putative D-alanyl-D-alanine carboxypeptidase.